The following is a 386-amino-acid chain: Phosphoglycerate kinase (386 aa).

Substrate is bound by residues 21-23, arginine 36, 59-62, arginine 112, and arginine 145; these read DLN and HLGR. Residues lysine 196, glutamate 313, and 339–342 each bind ATP; that span reads GGDT.

It belongs to the phosphoglycerate kinase family. Monomer.

Its subcellular location is the cytoplasm. It catalyses the reaction (2R)-3-phosphoglycerate + ATP = (2R)-3-phospho-glyceroyl phosphate + ADP. The protein operates within carbohydrate degradation; glycolysis; pyruvate from D-glyceraldehyde 3-phosphate: step 2/5. This chain is Phosphoglycerate kinase, found in Haemophilus influenzae (strain PittEE).